A 635-amino-acid polypeptide reads, in one-letter code: Probable extracellular metalloproteinase 1 (635 aa).

A signal peptide spans 1–19 (MHGLLLAAGLLSLPLHVLA). The propeptide occupies 20-246 (HPQPSTSTSL…VHNVVDYVAH (227 aa)). Asn-287 carries an N-linked (GlcNAc...) asparagine glycan. His-430 lines the Zn(2+) pocket. The active site involves Glu-431. A Zn(2+)-binding site is contributed by His-434. N-linked (GlcNAc...) asparagine glycans are attached at residues Asn-475, Asn-594, and Asn-623.

Belongs to the peptidase M36 family. Zn(2+) serves as cofactor.

It is found in the secreted. In terms of biological role, secreted metalloproteinase probably acting as a virulence factor. The sequence is that of Probable extracellular metalloproteinase 1 (MEP1) from Arthroderma benhamiae (strain ATCC MYA-4681 / CBS 112371) (Trichophyton mentagrophytes).